The chain runs to 209 residues: Glutathione S-transferase 1-1 (209 aa).

Positions 1–81 (MADFYYLPGS…YLVEKYGKTD (81 aa)) constitute a GST N-terminal domain. Residues S10, 51 to 53 (HTI), and 65 to 67 (ESR) each bind glutathione. The GST C-terminal domain occupies 87-209 (CPKKRAVINQ…GCLEFKKFFE (123 aa)).

It belongs to the GST superfamily. Theta family. In terms of assembly, homodimer.

The enzyme catalyses RX + glutathione = an S-substituted glutathione + a halide anion + H(+). It carries out the reaction 1,1,1-trichloro-2,2-bis(4-chlorophenyl)ethane = 1,1-dichloro-2,2-bis(4-chlorophenyl)ethylene + chloride + H(+). Its function is as follows. Conjugation of reduced glutathione to a wide number of exogenous and endogenous hydrophobic electrophiles. Has DDT dehydrochlorinase activity. The sequence is that of Glutathione S-transferase 1-1 (GstD1) from Drosophila sechellia (Fruit fly).